The chain runs to 164 residues: Respiratory growth induced protein 2 (164 aa).

The protein belongs to the RGI1 family.

Its subcellular location is the cytoplasm. Involved in the control of energetic metabolism and significantly contribute to cell fitness, especially under respiratory growth conditions. This is Respiratory growth induced protein 2 (RGI2) from Candida glabrata (strain ATCC 2001 / BCRC 20586 / JCM 3761 / NBRC 0622 / NRRL Y-65 / CBS 138) (Yeast).